Here is a 426-residue protein sequence, read N- to C-terminus: Alpha/beta hydrolase pydG (426 aa).

This sequence belongs to the AB hydrolase superfamily. As to quaternary structure, homodimer.

It participates in mycotoxin biosynthesis. Alpha/beta hydrolasee; part of the gene cluster that mediates the biosynthesis of pyrrocidines, fungal natural products containing a macrocyclic para-cyclophane connected to a decahydrofluorene ring system that show potent antibiotic activities toward Gram-negative bacteria. Within the pathway, pydG catalyzes the Knoevenagel condensation that affords the 3-pyrrolin-2-one ring, using as substrate the polyketide-tyrosyl acyl thioester product of pydA. The pathway begins with the PKS-NRPS pydA which, with the help of the trans-enoyl reductase pydC, synthesizes the polyketide-tyrosyl acyl thioester product which can be reductively off-loaded by the terminal reductase (R) domain in pydA. The alpha/beta hydrolase pydG is then required to catalyze the subsequent Knoevenagel condensation that affords the 3-pyrrolin-2-one ring, whereas the four proteins pydB, pydE, pydX and pydZ then function synergistically to form the cyclophane. PydB and the membrane-bound pydX and pydZ are lipid-binding proteins that can sequester and mold the pdyG product into the inverse S-shape. Binding of the medium chain reductase pydE to the complex would trigger the cascade oxidative cyclization. PydY is involved in the Diels-Alder cycloaddition that forms the decahydrofluorene core. Additional non-enzymatic hydroxylation yields pyrrocidine A2 which can be further reduced into pyrrocidine B by an endogenous reductase. The chain is Alpha/beta hydrolase pydG from Acremonium sp.